Reading from the N-terminus, the 135-residue chain is MSKLNKTILADFEAAQIQRKLPEFNQGDTVVVNVKVKEGNRERVQAYEGVVIGTKNAGLNSSFTVRKISHGFGVERVFQTHSAIIDSVEVKRRGKVRAGKLYYLRGLEGKAARIKEDLAAAAQAKAARQAAAKAE.

The protein belongs to the bacterial ribosomal protein bL19 family.

In terms of biological role, this protein is located at the 30S-50S ribosomal subunit interface and may play a role in the structure and function of the aminoacyl-tRNA binding site. This chain is Large ribosomal subunit protein bL19, found in Xanthomonas axonopodis pv. citri (strain 306).